Consider the following 192-residue polypeptide: Probable nicotinate-nucleotide adenylyltransferase (192 aa).

It belongs to the NadD family.

It catalyses the reaction nicotinate beta-D-ribonucleotide + ATP + H(+) = deamido-NAD(+) + diphosphate. The protein operates within cofactor biosynthesis; NAD(+) biosynthesis; deamido-NAD(+) from nicotinate D-ribonucleotide: step 1/1. Its function is as follows. Catalyzes the reversible adenylation of nicotinate mononucleotide (NaMN) to nicotinic acid adenine dinucleotide (NaAD). In Bradyrhizobium sp. (strain BTAi1 / ATCC BAA-1182), this protein is Probable nicotinate-nucleotide adenylyltransferase.